Here is a 536-residue protein sequence, read N- to C-terminus: Putative lipase ATG15 (536 aa).

Topologically, residues 1-8 are cytoplasmic; the sequence is MGNPTLMR. The helical; Signal-anchor for type II membrane protein transmembrane segment at 9–31 threads the bilayer; sequence WPVTRILVLGLVVTVLYKAMAIY. Residues 32–536 lie on the Lumenal side of the membrane; it reads SSRRAPVQVC…YCLEYGPELR (505 aa). Asparagine 152, asparagine 187, and asparagine 293 each carry an N-linked (GlcNAc...) asparagine glycan. Serine 309 acts as the Charge relay system in catalysis. N-linked (GlcNAc...) asparagine glycans are attached at residues asparagine 426 and asparagine 516.

It belongs to the AB hydrolase superfamily. Lipase family. In terms of assembly, binds to both phosphatidylinositol (PI) and phosphatidylinositol 3,5-bisphosphate (PIP2).

It is found in the endosome. Its subcellular location is the multivesicular body membrane. The protein resides in the prevacuolar compartment membrane. The catalysed reaction is a triacylglycerol + H2O = a diacylglycerol + a fatty acid + H(+). Its function is as follows. Lipase which is essential for lysis of subvacuolar cytoplasm to vacuole targeted bodies and intravacuolar autophagic bodies. Involved in the lysis of intravacuolar multivesicular body (MVB) vesicles. The intravacuolar membrane disintegration by ATG15 is critical to life span extension. The protein is Putative lipase ATG15 (ATG15) of Pichia angusta (Yeast).